Here is a 1020-residue protein sequence, read N- to C-terminus: Protein CLASP-2 (1020 aa).

A compositionally biased stretch (low complexity) spans 259–271 (ASDAASSSTSINS). Disordered stretches follow at residues 259–280 (ASDA…PFRS), 329–387 (PMTT…RPSA), and 419–461 (LQKA…ALDT). The span at 329–343 (PMTTRTLSKIDTSPG) shows a compositional bias: polar residues. Residues 372 to 381 (SQPGSRNGSP) are compositionally biased toward low complexity. The span at 450 to 460 (QKATPQKSALD) shows a compositional bias: polar residues. An HEAT repeat occupies 954–992 (LAPCVIKSYDSPSSAVRKTAVYCLVAMVNKLGMKTMEPH).

Belongs to the CLASP family. In terms of assembly, interacts with hcp-1 and hcp-2.

The protein resides in the cytoplasm. It localises to the cytoskeleton. The protein localises to the microtubule organizing center. Its subcellular location is the centrosome. It is found in the chromosome. The protein resides in the centromere. It localises to the kinetochore. The protein localises to the spindle. Functionally, probable microtubule plus-end tracking protein that promotes the stabilization of dynamic microtubules. Required for the formation of mitotic and meiotic spindles. Specifically promotes the polymerization of kinetochore-bound microtubules. Also required for cytoplasmic streaming. Essential for embryonic development. The polypeptide is Protein CLASP-2 (cls-2) (Caenorhabditis elegans).